The sequence spans 704 residues: DNA ligase (704 aa).

NAD(+) is bound by residues 44-48 (DYEYD), 93-94 (SI), and E125. K127 (N6-AMP-lysine intermediate) is an active-site residue. Residues R148, E184, K300, and K324 each coordinate NAD(+). Positions 418, 421, 436, and 442 each coordinate Zn(2+). The BRCT domain maps to 625-704 (IISSNISGKI…DEWEHLINEK (80 aa)).

This sequence belongs to the NAD-dependent DNA ligase family. LigA subfamily. The cofactor is Mg(2+). Mn(2+) serves as cofactor.

The catalysed reaction is NAD(+) + (deoxyribonucleotide)n-3'-hydroxyl + 5'-phospho-(deoxyribonucleotide)m = (deoxyribonucleotide)n+m + AMP + beta-nicotinamide D-nucleotide.. Its function is as follows. DNA ligase that catalyzes the formation of phosphodiester linkages between 5'-phosphoryl and 3'-hydroxyl groups in double-stranded DNA using NAD as a coenzyme and as the energy source for the reaction. It is essential for DNA replication and repair of damaged DNA. In Pelobacter propionicus (strain DSM 2379 / NBRC 103807 / OttBd1), this protein is DNA ligase.